Reading from the N-terminus, the 287-residue chain is Large ribosomal subunit protein uL2 (287 aa).

The interval 220 to 287 (VRGSVMNPCD…SKRSRGGRDS (68 aa)) is disordered. The segment covering 271-287 (VRRRRRISKRSRGGRDS) has biased composition (basic residues).

This sequence belongs to the universal ribosomal protein uL2 family. Part of the 50S ribosomal subunit. Forms a bridge to the 30S subunit in the 70S ribosome.

Its function is as follows. One of the primary rRNA binding proteins. Required for association of the 30S and 50S subunits to form the 70S ribosome, for tRNA binding and peptide bond formation. It has been suggested to have peptidyltransferase activity; this is somewhat controversial. Makes several contacts with the 16S rRNA in the 70S ribosome. This is Large ribosomal subunit protein uL2 from Prochlorococcus marinus (strain MIT 9515).